The primary structure comprises 387 residues: Succinate--CoA ligase [ADP-forming] subunit beta (387 aa).

Residues K46, 53–55, E99, A102, and E107 contribute to the ATP site; that span reads GRG. Residues N199 and D213 each contribute to the Mg(2+) site. Residues N264 and 321–323 each bind substrate; that span reads GIV.

The protein belongs to the succinate/malate CoA ligase beta subunit family. Heterotetramer of two alpha and two beta subunits. Requires Mg(2+) as cofactor.

It catalyses the reaction succinate + ATP + CoA = succinyl-CoA + ADP + phosphate. The enzyme catalyses GTP + succinate + CoA = succinyl-CoA + GDP + phosphate. It participates in carbohydrate metabolism; tricarboxylic acid cycle; succinate from succinyl-CoA (ligase route): step 1/1. Succinyl-CoA synthetase functions in the citric acid cycle (TCA), coupling the hydrolysis of succinyl-CoA to the synthesis of either ATP or GTP and thus represents the only step of substrate-level phosphorylation in the TCA. The beta subunit provides nucleotide specificity of the enzyme and binds the substrate succinate, while the binding sites for coenzyme A and phosphate are found in the alpha subunit. The polypeptide is Succinate--CoA ligase [ADP-forming] subunit beta (Campylobacter jejuni (strain RM1221)).